Here is a 1008-residue protein sequence, read N- to C-terminus: Pre-mRNA-splicing factor SNU114 (1008 aa).

S85 is subject to Phosphoserine. A Phosphothreonine modification is found at T88. Residues E131–S338 form the tr-type G domain. Residues G140–T147 are G1. G140 to T147 serves as a coordination point for GTP. The tract at residues G188–K192 is G2. Positions D214–G217 are G3. Residues D214–H218 and N268–D271 contribute to the GTP site. Positions N268–D271 are G4. The G5 stretch occupies residues S315–K317. The segment at T504–S536 is disordered. Positions S509–K520 are enriched in basic and acidic residues. Over residues S524 to S536 the composition is skewed to acidic residues.

The protein belongs to the TRAFAC class translation factor GTPase superfamily. Classic translation factor GTPase family. EF-G/EF-2 subfamily. As to quaternary structure, belongs to the CWC complex (or CEF1-associated complex), a spliceosome sub-complex reminiscent of a late-stage spliceosome composed of the U2, U5 and U6 snRNAs and at least BUD13, BUD31, BRR2, CDC40, CEF1, CLF1, CUS1, CWC2, CWC15, CWC21, CWC22, CWC23, CWC24, CWC25, CWC27, ECM2, HSH155, IST3, ISY1, LEA1, MSL1, NTC20, PRP8, PRP9, PRP11, PRP19, PRP21, PRP22, PRP45, PRP46, SLU7, SMB1, SMD1, SMD2, SMD3, SMX2, SMX3, SNT309, SNU114, SPP2, SYF1, SYF2, RSE1 and YJU2. Component of the U4/U6-U5 tri-snRNP complex composed of the U4, U6 and U5 snRNAs and at least PRP3, PRP4, PRP6, PRP8, PRP18, PRP31, PRP38, SNU13, SNU23, SNU66, SNU114, SPP381, SMB1, SMD1, SMD2, SMD3, SMX2, SMX3, LSM2, LSM3, LSM4, LSM5, LSM6, LSM7, LSM8, BRR2 and DIB1. Interacts (via C-terminus) with CWC21. Interacts (via N-terminus) with PRP8 (via SCwid domain).

It is found in the nucleus. Its function is as follows. Component of the U5 snRNP complex required for pre-mRNA splicing. Binds GTP. This chain is Pre-mRNA-splicing factor SNU114 (SNU114), found in Saccharomyces cerevisiae (strain ATCC 204508 / S288c) (Baker's yeast).